Reading from the N-terminus, the 119-residue chain is Small ribosomal subunit protein bS16 (119 aa).

The protein belongs to the bacterial ribosomal protein bS16 family.

This Chlamydia abortus (strain DSM 27085 / S26/3) (Chlamydophila abortus) protein is Small ribosomal subunit protein bS16.